Here is a 999-residue protein sequence, read N- to C-terminus: Bifunctional glutamine synthetase adenylyltransferase/adenylyl-removing enzyme (999 aa).

An adenylyl removase region spans residues 1–483 (MTPGRRSSTF…LHEKLFYRPL (483 aa)). Positions 489–999 (QLAPGEARLS…RTVVEDLFYA (511 aa)) are adenylyl transferase.

The protein belongs to the GlnE family. Mg(2+) serves as cofactor.

It catalyses the reaction [glutamine synthetase]-O(4)-(5'-adenylyl)-L-tyrosine + phosphate = [glutamine synthetase]-L-tyrosine + ADP. The enzyme catalyses [glutamine synthetase]-L-tyrosine + ATP = [glutamine synthetase]-O(4)-(5'-adenylyl)-L-tyrosine + diphosphate. Its function is as follows. Adenylation and deadenylation of glutamate--ammonia ligase. In terms of biological role, involved in the regulation of glutamine synthetase GlnA, a key enzyme in the process to assimilate ammonia. When cellular nitrogen levels are high, the C-terminal adenylyl transferase (AT) inactivates GlnA by covalent transfer of an adenylyl group from ATP to specific tyrosine residue of GlnA, thus reducing its activity. Conversely, when nitrogen levels are low, the N-terminal adenylyl removase (AR) activates GlnA by removing the adenylyl group by phosphorolysis, increasing its activity. The regulatory region of GlnE binds the signal transduction protein PII (GlnB) which indicates the nitrogen status of the cell. The chain is Bifunctional glutamine synthetase adenylyltransferase/adenylyl-removing enzyme from Streptomyces coelicolor (strain ATCC BAA-471 / A3(2) / M145).